Consider the following 114-residue polypeptide: Nucleoid-associated protein Clos_2855 (114 aa).

It belongs to the YbaB/EbfC family. Homodimer.

The protein localises to the cytoplasm. It localises to the nucleoid. Functionally, binds to DNA and alters its conformation. May be involved in regulation of gene expression, nucleoid organization and DNA protection. The chain is Nucleoid-associated protein Clos_2855 from Alkaliphilus oremlandii (strain OhILAs) (Clostridium oremlandii (strain OhILAs)).